The primary structure comprises 606 residues: Chaperone protein DnaK (606 aa).

Thr-174 is modified (phosphothreonine; by autocatalysis). Over residues 579 to 593 the composition is skewed to polar residues; the sequence is ASAAGNPGQGQTNEN. Residues 579–606 are disordered; the sequence is ASAAGNPGQGQTNENPGGKTIDGDYKVN.

Belongs to the heat shock protein 70 family.

Functionally, acts as a chaperone. This chain is Chaperone protein DnaK, found in Dictyoglomus thermophilum (strain ATCC 35947 / DSM 3960 / H-6-12).